Reading from the N-terminus, the 150-residue chain is Endoribonuclease YbeY (150 aa).

3 residues coordinate Zn(2+): His102, His106, and His112.

Belongs to the endoribonuclease YbeY family. Zn(2+) is required as a cofactor.

It is found in the cytoplasm. Single strand-specific metallo-endoribonuclease involved in late-stage 70S ribosome quality control and in maturation of the 3' terminus of the 16S rRNA. The sequence is that of Endoribonuclease YbeY from Thermotoga maritima (strain ATCC 43589 / DSM 3109 / JCM 10099 / NBRC 100826 / MSB8).